We begin with the raw amino-acid sequence, 743 residues long: 1,4-alpha-glucan branching enzyme GlgB (743 aa).

The active-site Nucleophile is the aspartate 416. The Proton donor role is filled by glutamate 469.

Belongs to the glycosyl hydrolase 13 family. GlgB subfamily. As to quaternary structure, monomer.

The catalysed reaction is Transfers a segment of a (1-&gt;4)-alpha-D-glucan chain to a primary hydroxy group in a similar glucan chain.. The protein operates within glycan biosynthesis; glycogen biosynthesis. Its function is as follows. Catalyzes the formation of the alpha-1,6-glucosidic linkages in glycogen by scission of a 1,4-alpha-linked oligosaccharide from growing alpha-1,4-glucan chains and the subsequent attachment of the oligosaccharide to the alpha-1,6 position. The protein is 1,4-alpha-glucan branching enzyme GlgB of Shewanella baltica (strain OS185).